Reading from the N-terminus, the 710-residue chain is MMFRDQVGMLSGWFKGWNECEQTVALLSLLKRVSRTQARFLQICLEHSLVDCTELHILEGEANNPAIINQWQQESKDKVISQLLTHLPLLKPGNIDAKMAYMKLLPKILAHSIEHNQHIEESRQLLSYALIHPATSLDDRSALAMWLNHLEDRTSGNFSTQSRCRSDSLDYGQMQYYHQRQNSDDKQNGWPNSRDSGICISSSGWQEKNTGCENGHLPLYSSSSVPSTINAIGTSTILSGQTHHSSLKRSVSLTPPMNVPNQPLGHGWMSHEDLRARGSQGIPSDHAPLSPQSSVASSGSGGSEHLEEQSTACNTFQDEGSGMKDVPAWLKSLRLHKYAALFSHITYDEMMSLNECHLEAQNVTKGARHKIVISIQKLKERHNLLKTLERDVLEGGNLRVPLQELHQIILTPIKACFPQNSNTEEHDQEADSQPPLLASKNQATESKDSASGGIQQHHIGNCESESGGVPLPESDLPGQFTRVMGKVCTQLLVSRPDEENISSYLQLIDKCLTHDAFTETQKKRLLSWKQQVQKLFRSFPRKSLLDVAGYRQQRKTSVDVLIGSRGFGQSNSLPTAGSVGSGIARRNPRQFQIPSRNLPSTRLSLLGASSLLGATQRASASNPAMLKQGRQNLWFANPGGSNSMPSRSHSSVQRTRSLPVHTSPQTMLMFQQQDFQVPVTEPDINNRLESLCLSMTEHALGDGVDRTSTI.

Disordered stretches follow at residues 276-319 and 441-476; these read ARGS…FQDE and NQAT…ESDL. The span at 309–318 shows a compositional bias: polar residues; that stretch reads QSTACNTFQD. An SAM domain is found at 319 to 379; the sequence is EGSGMKDVPA…KIVISIQKLK (61 aa).

It belongs to the SMAUG family.

The protein resides in the cytoplasm. Its subcellular location is the cell projection. It is found in the dendrite. The protein localises to the synapse. It localises to the synaptosome. Acts as a translational repressor. The polypeptide is Protein Smaug homolog 1 (samd4a) (Xenopus laevis (African clawed frog)).